The sequence spans 292 residues: Short chain dehydrogenases/reductase notP' (292 aa).

Residues 1–25 form a disordered region; it reads MPQTSDGNVHAPQYREAKPSQGDPS. Residues Leu-48, Asp-97, Lys-158, Tyr-193, Lys-197, Ile-230, and Thr-232 each contribute to the NADP(+) site. Tyr-193 serves as the catalytic Proton donor. Residue Lys-197 is the Lowers pKa of active site Tyr of the active site.

The protein belongs to the short-chain dehydrogenases/reductases (SDR) family.

Its function is as follows. Short chain dehydrogenases/reductase; part of the gene cluster that mediates the biosynthesis of notoamide, a fungal indole alkaloid that belongs to a family of natural products containing a characteristic bicyclo[2.2.2]diazaoctane core. The first step of notoamide biosynthesis involves coupling of L-proline and L-tryptophan by the bimodular NRPS notE', to produce cyclo-L-tryptophan-L-proline called brevianamide F. The reverse prenyltransferase notF' then acts as a deoxybrevianamide E synthase and converts brevianamide F to deoxybrevianamide E via reverse prenylation at C-2 of the indole ring leading to the bicyclo[2.2.2]diazaoctane core. Deoxybrevianamide E is further hydroxylated at C-6 of the indole ring, likely catalyzed by the cytochrome P450 monooxygenase notG', to yield 6-hydroxy-deoxybrevianamide E. 6-hydroxy-deoxybrevianamide E is a specific substrate of the prenyltransferase notC' for normal prenylation at C-7 to produce 6-hydroxy-7-prenyl-deoxybrevianamide, also called notoamide S. As the proposed pivotal branching point in notoamide biosynthesis, notoamide S can be diverted to notoamide E through an oxidative pyran ring closure putatively catalyzed by either notH' cytochrome P450 monooxygenase or the notD' FAD-linked oxidoreductase. This step would be followed by an indole 2,3-epoxidation-initiated pinacol-like rearrangement catalyzed by the notB' FAD-dependent monooxygenase leading to the formation of notoamide C and notoamide D. On the other hand notoamide S is converted to notoamide T by notH' (or notD'), a bifunctional oxidase that also functions as the intramolecular Diels-Alderase responsible for generation of (-)-notoamide T. To generate antipodal (+)-notoaminide T, notH (or notD) in Aspergillus strain MF297-2 is expected to catalyze a Diels-Alder reaction leading to the opposite stereochemistry. The remaining oxidoreductase notD' (or notH') likely catalyzes the oxidative pyran ring formation to yield (-)-stephacidin A. The FAD-dependent monooxygenase notI' is highly similar to notB' and is predicted to catalyze a similar conversion from (-)-stephacidin A to (+)-notoamide B via the 2,3-epoxidation of (-)-stephacidin A followed by a pinacol-type rearrangement. Finally, it remains unclear which enzyme could be responsible for the final hydroxylation steps leading to notoamide A and sclerotiamide. The function of notP' in the notoamide biosynthesis has not been determined yet. This Aspergillus versicolor protein is Short chain dehydrogenases/reductase notP'.